Reading from the N-terminus, the 94-residue chain is Co-chaperonin GroES (94 aa).

Belongs to the GroES chaperonin family. As to quaternary structure, heptamer of 7 subunits arranged in a ring. Interacts with the chaperonin GroEL.

The protein resides in the cytoplasm. Functionally, together with the chaperonin GroEL, plays an essential role in assisting protein folding. The GroEL-GroES system forms a nano-cage that allows encapsulation of the non-native substrate proteins and provides a physical environment optimized to promote and accelerate protein folding. GroES binds to the apical surface of the GroEL ring, thereby capping the opening of the GroEL channel. The sequence is that of Co-chaperonin GroES from Acetivibrio thermocellus (strain ATCC 27405 / DSM 1237 / JCM 9322 / NBRC 103400 / NCIMB 10682 / NRRL B-4536 / VPI 7372) (Clostridium thermocellum).